A 384-amino-acid polypeptide reads, in one-letter code: MEAKDHIERRPDRVSIRRLKLVNFRNYAELSLPLGPGHVVLTGENGSGKTNLIEAISFLSPGRGLRRAAYDDVARANAEGGFAIHAALDCMIYGDAEIGTGTAGGGEGGRKVRINRIAASADDLLDYARILWVVPSMDGLFTGGASDRRRFLDRMVLAIDTAHGKRVLDYEKAMRSRNRLLNDGSNDDQWLDAIENQMAELGTAIAAARAQAMRLIAAMIERLPAEGPFPKADCFLEGALESRIGVEAALDLEEDFRRTLRDGRARDRAAGRTLDGPHRTDLIVQHRPKSMPAALCSTGEQKALLIGLILAHARLTAELSGMAPILLLDEIAAHLDMGRRAALFGILDELGGQAFMTGTDRALFDALAGDAQFFNVSAGQLTGI.

Residue 43 to 50 coordinates ATP; the sequence is GENGSGKT.

This sequence belongs to the RecF family.

The protein localises to the cytoplasm. The RecF protein is involved in DNA metabolism; it is required for DNA replication and normal SOS inducibility. RecF binds preferentially to single-stranded, linear DNA. It also seems to bind ATP. The chain is DNA replication and repair protein RecF from Brucella abortus (strain 2308).